The chain runs to 233 residues: Enolase-phosphatase E1 (233 aa).

The protein belongs to the HAD-like hydrolase superfamily. MasA/MtnC family. In terms of assembly, monomer. Mg(2+) is required as a cofactor.

It catalyses the reaction 5-methylsulfanyl-2,3-dioxopentyl phosphate + H2O = 1,2-dihydroxy-5-(methylsulfanyl)pent-1-en-3-one + phosphate. The protein operates within amino-acid biosynthesis; L-methionine biosynthesis via salvage pathway; L-methionine from S-methyl-5-thio-alpha-D-ribose 1-phosphate: step 3/6. It functions in the pathway amino-acid biosynthesis; L-methionine biosynthesis via salvage pathway; L-methionine from S-methyl-5-thio-alpha-D-ribose 1-phosphate: step 4/6. In terms of biological role, bifunctional enzyme that catalyzes the enolization of 2,3-diketo-5-methylthiopentyl-1-phosphate (DK-MTP-1-P) into the intermediate 2-hydroxy-3-keto-5-methylthiopentenyl-1-phosphate (HK-MTPenyl-1-P), which is then dephosphorylated to form the acireductone 1,2-dihydroxy-3-keto-5-methylthiopentene (DHK-MTPene). The protein is Enolase-phosphatase E1 of Hahella chejuensis (strain KCTC 2396).